We begin with the raw amino-acid sequence, 81 residues long: UPF0434 protein msl4429 (81 aa).

This sequence belongs to the UPF0434 family.

This is UPF0434 protein msl4429 from Mesorhizobium japonicum (strain LMG 29417 / CECT 9101 / MAFF 303099) (Mesorhizobium loti (strain MAFF 303099)).